A 464-amino-acid chain; its full sequence is Cysteine--tRNA ligase (464 aa).

Residue Cys29 participates in Zn(2+) binding. The short motif at 31–41 is the 'HIGH' region element; that stretch reads ATVQGDPHIGH. Residues Cys207, His232, and Glu236 each coordinate Zn(2+). The short motif at 263-267 is the 'KMSKS' region element; it reads KMSKS. Lys266 is a binding site for ATP.

It belongs to the class-I aminoacyl-tRNA synthetase family. Monomer. Requires Zn(2+) as cofactor.

It is found in the cytoplasm. The catalysed reaction is tRNA(Cys) + L-cysteine + ATP = L-cysteinyl-tRNA(Cys) + AMP + diphosphate. The polypeptide is Cysteine--tRNA ligase (Rhodococcus jostii (strain RHA1)).